An 839-amino-acid polypeptide reads, in one-letter code: Protein translocase subunit SecA (839 aa).

Residues Gln-85, 103–107, and Asp-492 contribute to the ATP site; that span reads GEGKT. Residues 794–820 form a disordered region; sequence EINYSGPDAGDTKKEPVRRKEKKIGRN. 4 residues coordinate Zn(2+): Cys-823, Cys-825, Cys-834, and Cys-835.

Belongs to the SecA family. As to quaternary structure, monomer and homodimer. Part of the essential Sec protein translocation apparatus which comprises SecA, SecYEG and auxiliary proteins SecDF. Other proteins may also be involved. Requires Zn(2+) as cofactor.

The protein resides in the cell membrane. The protein localises to the cytoplasm. The catalysed reaction is ATP + H2O + cellular proteinSide 1 = ADP + phosphate + cellular proteinSide 2.. Functionally, part of the Sec protein translocase complex. Interacts with the SecYEG preprotein conducting channel. Has a central role in coupling the hydrolysis of ATP to the transfer of proteins into and across the cell membrane, serving as an ATP-driven molecular motor driving the stepwise translocation of polypeptide chains across the membrane. The sequence is that of Protein translocase subunit SecA from Clostridium acetobutylicum (strain ATCC 824 / DSM 792 / JCM 1419 / IAM 19013 / LMG 5710 / NBRC 13948 / NRRL B-527 / VKM B-1787 / 2291 / W).